The following is a 676-amino-acid chain: Probable LRR receptor-like serine/threonine-protein kinase At4g31250 (676 aa).

An N-terminal signal peptide occupies residues 1–26 (MTRDDKFPIVYSLLLIVLLFVSPIYG). The Extracellular portion of the chain corresponds to 27–242 (DGDADALLKF…LLPCRYTRPP (216 aa)). Residues Asn-42, Asn-73, and Asn-83 are each glycosylated (N-linked (GlcNAc...) asparagine). LRR repeat units lie at residues 98–122 (IRGL…IDGL), 123–146 (VSLA…LFSG), 148–171 (KALL…LGKL), 172–195 (PKLT…KQKN), and 197–218 (VTVN…GLMN). Asn-218 carries an N-linked (GlcNAc...) asparagine glycan. A helical transmembrane segment spans residues 243 to 263 (FFTVFLLALTILAVVVLITVF). Residues 264–676 (LSVCILSRRQ…RAMTEEFSLM (413 aa)) lie on the Cytoplasmic side of the membrane. Over residues 319–330 (TVQRDSTATSGA) the composition is skewed to polar residues. The tract at residues 319–347 (TVQRDSTATSGAISVGGLSPDEDKRGDQR) is disordered. A Protein kinase domain is found at 366-640 (RASAEVLGSG…HEAVDRIEEV (275 aa)). A Phosphoserine modification is found at Ser-368. Residues 372-380 (LGSGGFGSS) and Lys-394 contribute to the ATP site. Residues Ser-446 and Ser-543 each carry the phosphoserine modification. The segment at 641–676 (DRDAGGGQESVRSSYVTASDGDHRSSRAMTEEFSLM) is disordered.

It belongs to the protein kinase superfamily. Ser/Thr protein kinase family.

Its subcellular location is the membrane. It carries out the reaction L-seryl-[protein] + ATP = O-phospho-L-seryl-[protein] + ADP + H(+). The catalysed reaction is L-threonyl-[protein] + ATP = O-phospho-L-threonyl-[protein] + ADP + H(+). In Arabidopsis thaliana (Mouse-ear cress), this protein is Probable LRR receptor-like serine/threonine-protein kinase At4g31250.